The following is a 109-amino-acid chain: Large ribosomal subunit protein eL42 (109 aa).

Residues 23–53 (VSQYKKSKESTHAQGRRRYDMKQSGFGGQTK) form a disordered region. Residues 28–43 (KSKESTHAQGRRRYDM) show a composition bias toward basic and acidic residues.

Belongs to the eukaryotic ribosomal protein eL42 family.

It is found in the cytoplasm. The sequence is that of Large ribosomal subunit protein eL42 (RPL36A) from Tetrahymena thermophila (strain SB210).